Here is a 1519-residue protein sequence, read N- to C-terminus: Rho guanine nucleotide exchange factor 40 (1519 aa).

2 disordered regions span residues 194–237 (VGHQ…PVEG) and 253–503 (RGSP…LETV). Positions 200–218 (TLPPELPSGPPGLPSPPLP) are enriched in pro residues. Phosphoserine is present on serine 262. The span at 280-290 (KGRHRRHRAWM) shows a compositional bias: basic residues. The segment covering 314–341 (ASPESPPGAEAVPEAAVLEVSEPPAEAV) has biased composition (low complexity). A compositionally biased stretch (gly residues) spans 355-367 (LRGGGGGGQGAEG). A Phosphothreonine modification is found at threonine 371. Residues 374 to 386 (RTGKGNRRKKRAA) are compositionally biased toward basic residues. Serine 419 is modified (phosphoserine). Over residues 421 to 457 (SEHKLPECHLVKEEYEGSGKPESEPKELKTAGEKEPQ) the composition is skewed to basic and acidic residues. The stretch at 828–871 (SAEVQERLAQAREALALEENATSQKVLDIFEQRLEQVESGLHRA) forms a coiled coil. Phosphoserine occurs at positions 931 and 961. Residues 934–961 (ALREWGRCQARCQELERRIQQHVGEEAS) are a coiled coil. Positions 955–1031 (HVGEEASPRG…ELAPEAEGRP (77 aa)) are disordered. Positions 980–996 (WGPRSPSPSLSSLLLPS) are enriched in low complexity. Residue serine 1082 is modified to Phosphoserine. Positions 1085–1253 (AQQRLVSELI…REQEARGRDL (169 aa)) constitute a DH domain. The 108-residue stretch at 1265–1372 (DLKEQGQLLH…WTSSIAQLLW (108 aa)) folds into the PH domain. 3 positions are modified to phosphoserine: serine 1433, serine 1438, and serine 1474. Residues 1466–1519 (TLDSSGDVSPGPRNSPSLQPPHPGSSTPTLASRGILGLSRQSHARALSDPTTPL) are disordered. Residues 1467–1482 (LDSSGDVSPGPRNSPS) are compositionally biased toward polar residues. At threonine 1492 the chain carries Phosphothreonine.

Expressed at higher level in the central nervous system and skeletal muscle and greater abundance in fetal than adult brain (at protein level).

It localises to the cytoplasm. Functionally, may act as a guanine nucleotide exchange factor (GEF). This is Rho guanine nucleotide exchange factor 40 (ARHGEF40) from Homo sapiens (Human).